A 311-amino-acid chain; its full sequence is Nod factor export ATP-binding protein I (311 aa).

The ABC transporter domain occupies 13 to 243 (IDLAGVSKSY…QIGCPVIEIY (231 aa)). 45–52 (GPNGAGKS) is a binding site for ATP.

It belongs to the ABC transporter superfamily. Lipooligosaccharide exporter (TC 3.A.1.102) family. As to quaternary structure, the complex is composed of two ATP-binding proteins (NodI) and two transmembrane proteins (NodJ).

The protein localises to the cell inner membrane. Part of the ABC transporter complex NodIJ involved in the export of the nodulation factors (Nod factors), the bacterial signal molecules that induce symbiosis and subsequent nodulation induction. Nod factors are LCO (lipo-chitin oligosaccharide), a modified beta-1,4-linked N-acetylglucosamine oligosaccharide. This subunit is responsible for energy coupling to the transport system. The protein is Nod factor export ATP-binding protein I of Rhizobium johnstonii (strain DSM 114642 / LMG 32736 / 3841) (Rhizobium leguminosarum bv. viciae).